A 116-amino-acid polypeptide reads, in one-letter code: Protein lin-52 homolog (116 aa).

Ser-28 and Ser-53 each carry phosphoserine.

Belongs to the lin-52 family. Component of the DREAM complex (also named LINC complex) at least composed of E2F4, E2F5, LIN9, LIN37, LIN52, LIN54, MYBL1, MYBL2, RBL1, RBL2, RBBP4, TFDP1 and TFDP2. The complex exists in quiescent cells where it represses cell cycle-dependent genes. It dissociates in S phase when LIN9, LIN37, LIN52 and LIN54 form a subcomplex that binds to MYBL2.

The chain is Protein lin-52 homolog (LIN52) from Homo sapiens (Human).